The following is a 564-amino-acid chain: Ferric reductase transmembrane component 1 (564 aa).

An N-linked (GlcNAc...) asparagine glycan is attached at asparagine 4. 2 helical membrane-spanning segments follow: residues 10–30 and 73–93; these read TVIA…MFWL and VILT…FIGM. Asparagine 111 is a glycosylation site (N-linked (GlcNAc...) asparagine). Residues 117 to 137 traverse the membrane as a helical segment; it reads VAARLGFLACGLYVTSYFFSI. Residues 121-254 enclose the Ferric oxidoreductase domain; sequence LGFLACGLYV…VYMKVCVAVY (134 aa). Residues histidine 157 and histidine 171 each coordinate heme. Helical transmembrane passes span 160–180 and 193–213; these read LSQY…GLAA and IIGY…LPFF. Histidine 225 and histidine 239 together coordinate heme. One can recognise an FAD-binding FR-type domain in the interval 255–410; sequence VFDRGCRMLR…DGPYGPVSNP (156 aa). The N-linked (GlcNAc...) asparagine glycan is linked to asparagine 268. An FAD-binding site is contributed by 317-323; sequence HPFTIAS. Asparagine 360 carries N-linked (GlcNAc...) asparagine glycosylation. Phosphoserine occurs at positions 362, 381, and 383. Residues 417–437 form a helical membrane-spanning segment; sequence LFLFAGGVGVSYILPIILDTI. 419–427 provides a ligand contact to NAD(+); sequence LFAGGVGVS. Residue asparagine 501 is glycosylated (N-linked (GlcNAc...) asparagine).

The protein belongs to the ferric reductase (FRE) family. Requires FAD as cofactor. The cofactor is heme.

The protein localises to the cell membrane. It catalyses the reaction 2 a Fe(II)-siderophore + NADP(+) + H(+) = 2 a Fe(III)-siderophore + NADPH. Functionally, metalloreductase responsible for reducing extracellular iron and copper prior to import. Catalyzes the reductive uptake of Fe(3+)-salts and Fe(3+) bound to catecholate or hydroxamate siderophores. Fe(3+) is reduced to Fe(2+), which then dissociates from the siderophore and can be imported by the high-affinity Fe(2+) transport complex in the plasma membrane. Also participates in Cu(2+) reduction and Cu(+) uptake. The chain is Ferric reductase transmembrane component 1 (frp1) from Schizosaccharomyces pombe (strain 972 / ATCC 24843) (Fission yeast).